A 144-amino-acid chain; its full sequence is AP-4 complex subunit sigma-1 (144 aa).

The protein belongs to the adaptor complexes small subunit family. Adaptor protein complex 4 (AP-4) is a heterotetramer composed of two large adaptins (epsilon-type subunit AP4E1 and beta-type subunit AP4B1), a medium adaptin (mu-type subunit AP4M1) and a small adaptin (sigma-type AP4S1).

The protein resides in the golgi apparatus. It is found in the trans-Golgi network membrane. Component of the adaptor protein complex 4 (AP-4). Adaptor protein complexes are vesicle coat components involved both in vesicle formation and cargo selection. They control the vesicular transport of proteins in different trafficking pathways. AP-4 forms a non clathrin-associated coat on vesicles departing the trans-Golgi network (TGN) and may be involved in the targeting of proteins from the trans-Golgi network (TGN) to the endosomal-lysosomal system. It is also involved in protein sorting to the basolateral membrane in epithelial cells and the proper asymmetric localization of somatodendritic proteins in neurons. AP-4 is involved in the recognition and binding of tyrosine-based sorting signals found in the cytoplasmic part of cargos, but may also recognize other types of sorting signal. This Mus musculus (Mouse) protein is AP-4 complex subunit sigma-1.